We begin with the raw amino-acid sequence, 44 residues long: U4-ctenitoxin-Co1a (44 aa).

Cystine bridges form between Cys-2–Cys-19, Cys-9–Cys-25, Cys-18–Cys-39, and Cys-27–Cys-37.

Expressed by the venom gland.

Its subcellular location is the secreted. Its function is as follows. Omega-agatoxins are antagonists of voltage-gated calcium channels (Cav). Toxic to mice by intracerebroventricular injection. The polypeptide is U4-ctenitoxin-Co1a (Ctenus ornatus (Brazilian spider)).